The sequence spans 491 residues: NADH-quinone oxidoreductase subunit N 1 (491 aa).

A run of 14 helical transmembrane segments spans residues 15-35 (VLGM…VDMF), 41-61 (VLLT…ALDY), 77-97 (FGVL…LIAF), 105-125 (LSQG…LFLV), 130-150 (LVTI…LTGF), 165-185 (LLLG…IYGM), 211-231 (PILL…VSMF), 247-269 (PVTA…RFLN), 279-299 (WQLL…IVAV), 307-327 (MLAY…LAAS), 333-353 (AFTV…AVLI), 378-398 (LALA…TAGF), 416-436 (LAII…RVIV), and 459-479 (LGVI…NIFT).

This sequence belongs to the complex I subunit 2 family. NDH-1 is composed of 14 different subunits. Subunits NuoA, H, J, K, L, M, N constitute the membrane sector of the complex.

The protein resides in the cell membrane. The enzyme catalyses a quinone + NADH + 5 H(+)(in) = a quinol + NAD(+) + 4 H(+)(out). NDH-1 shuttles electrons from NADH, via FMN and iron-sulfur (Fe-S) centers, to quinones in the respiratory chain. The immediate electron acceptor for the enzyme in this species is believed to be ubiquinone. Couples the redox reaction to proton translocation (for every two electrons transferred, four hydrogen ions are translocated across the cytoplasmic membrane), and thus conserves the redox energy in a proton gradient. In Herpetosiphon aurantiacus (strain ATCC 23779 / DSM 785 / 114-95), this protein is NADH-quinone oxidoreductase subunit N 1.